We begin with the raw amino-acid sequence, 303 residues long: MQKFDTRTFQGLILTLQDYWARQGCTIVQPLDMEVGAGTSHPMTCLRALGPEPMATAYVQPSRRPTDGRYGENPNRLQHYYQFQVVIKPSPENIQELYLGSLKELGMDPTIHDIRFVEDNWENPTLGAWGLGWEVWLNGMEVTQFTYFQQVGGLECKPVTGEITYGLERLAMYIQGVDSVYDLVWSDGPLGKTTYGDVFHQNEVEQSTYNFEYADVDFLFTCFEQYEKEAQQLLALENPLPLPAYERILKAAHSFNLLDARKAISVTERQRYILRIRTLTKAVAEAYYASREALGFPMCNKEK.

The protein belongs to the class-II aminoacyl-tRNA synthetase family. Tetramer of two alpha and two beta subunits.

The protein localises to the cytoplasm. It carries out the reaction tRNA(Gly) + glycine + ATP = glycyl-tRNA(Gly) + AMP + diphosphate. The polypeptide is Glycine--tRNA ligase alpha subunit (Salmonella arizonae (strain ATCC BAA-731 / CDC346-86 / RSK2980)).